The chain runs to 279 residues: Large ribosomal subunit protein uL2 (279 aa).

Disordered stretches follow at residues 1–43 (MGIK…TAGR) and 207–279 (KAGR…PGKH). Polar residues predominate over residues 8–22 (PTTNGRRNMTASDFS). Residues 23 to 33 (EITKTKPEKSL) are compositionally biased toward basic and acidic residues. The segment covering 34 to 43 (LDSQSHTAGR) has biased composition (polar residues). Basic residues-rich tracts occupy residues 209 to 219 (GRTRWQGKRPT) and 254 to 279 (TLGK…PGKH).

The protein belongs to the universal ribosomal protein uL2 family. In terms of assembly, part of the 50S ribosomal subunit. Forms a bridge to the 30S subunit in the 70S ribosome.

One of the primary rRNA binding proteins. Required for association of the 30S and 50S subunits to form the 70S ribosome, for tRNA binding and peptide bond formation. It has been suggested to have peptidyltransferase activity; this is somewhat controversial. Makes several contacts with the 16S rRNA in the 70S ribosome. The sequence is that of Large ribosomal subunit protein uL2 from Lactiplantibacillus plantarum (strain ATCC BAA-793 / NCIMB 8826 / WCFS1) (Lactobacillus plantarum).